A 589-amino-acid chain; its full sequence is Cytoplasmic polyadenylation element-binding protein 2 (589 aa).

Disordered stretches follow at residues 1-103 (MPPP…QAAA) and 118-140 (PLLK…SMSW). The segment covering 24–33 (FFPSFSPVSP) has biased composition (low complexity). A compositionally biased stretch (gly residues) spans 44-53 (SGGGGGGFGG). Residues 60 to 81 (VPPPPPPAMNIPQQQPPPPAAP) are compositionally biased toward pro residues. 2 stretches are compositionally biased toward low complexity: residues 82 to 103 (QQPQ…QAAA) and 130 to 140 (SSGWGTGSMSW). A Phosphoserine modification is found at S89. RRM domains are found at residues 332 to 423 (RKVF…PWNL) and 440 to 522 (KTIF…PYVL).

Belongs to the RRM CPEB family. Interacts with TENT2/GLD2.

It localises to the cytoplasm. May play a role in translational regulation of stored mRNAs in transcriptionally inactive haploid spermatids. Binds to poly(U) RNA oligomers. Required for cell cycle progression, specifically for the transition from metaphase to anaphase. The sequence is that of Cytoplasmic polyadenylation element-binding protein 2 (CPEB2) from Homo sapiens (Human).